The chain runs to 94 residues: ESAT-6-like protein EsxL (94 aa).

Belongs to the WXG100 family. ESAT-6 subfamily. In terms of assembly, strongly interacts with EsxK to form a heterodimeric complex under reducing conditions.

Its subcellular location is the secreted. This Mycobacterium bovis (strain ATCC BAA-935 / AF2122/97) protein is ESAT-6-like protein EsxL.